We begin with the raw amino-acid sequence, 295 residues long: MSSLPVSESEGEGSGTSVQVPSRGGQVTPGEKAFSLRTKHVFLTYPRCPISPEEAGQKIADRLKNKKCNYIYISREFHADGEPHLHAFVQLEANFRTTSPKYFDLDEFHPNIQAARQPASTLKYCMKHPESSWEFGKFLKPKVNRSPTQSASRDKTMKQIMANATSRDEYLSMVRKSFPFEWAVRLQQFQYSANALFPDPPQTYSAPYASRDMSDHPVIGEWLQQELYTVSPQALSLHAGISEEQARIDLQWMSDLTRSGALESGDEACTSVGQQELERLLGPEVLELITTGSTQ.

The interval 1–31 is disordered; sequence MSSLPVSESEGEGSGTSVQVPSRGGQVTPGE. Residues 35–138 enclose the CRESS-DNA virus Rep endonuclease domain; that stretch reads SLRTKHVFLT…PESSWEFGKF (104 aa). The short motif at 42–45 is the RCR-1 element; the sequence is FLTY. A divalent metal cation is bound by residues Glu-76, His-84, and His-86. The short motif at 84–86 is the RCR-2 element; sequence HLH. Tyr-124 functions as the For DNA cleavage activity in the catalytic mechanism. The RCR-3 motif lies at 124-127; sequence YCMK. The segment at 192 to 204 is oligomerization; sequence SANALFPDPPQTY.

This sequence belongs to the geminiviridae Rep protein family. Homooligomer. Part of the C- and V-complexes which are RepA-Rep-DNA complexes involved in the c-sense and v-sense transcription.

The protein resides in the host nucleus. Its subcellular location is the host cytoplasm. Functionally, implicated in enhancement of V-sense gene expression. Acts a an inhibitor of C-sense gene transcription. In Avena sativa (Oat), this protein is Replication-associated protein A.